The sequence spans 433 residues: UPF0597 protein DNO_0106 (433 aa).

This sequence belongs to the UPF0597 family.

In Dichelobacter nodosus (strain VCS1703A), this protein is UPF0597 protein DNO_0106.